The following is a 306-amino-acid chain: Homoserine O-succinyltransferase (306 aa).

Cysteine 142 functions as the Acyl-thioester intermediate in the catalytic mechanism. The substrate site is built by lysine 163 and serine 192. Histidine 233 functions as the Proton acceptor in the catalytic mechanism. Glutamate 235 is an active-site residue. Residue arginine 247 coordinates substrate.

The protein belongs to the MetA family.

It is found in the cytoplasm. The catalysed reaction is L-homoserine + succinyl-CoA = O-succinyl-L-homoserine + CoA. The protein operates within amino-acid biosynthesis; L-methionine biosynthesis via de novo pathway; O-succinyl-L-homoserine from L-homoserine: step 1/1. Its function is as follows. Transfers a succinyl group from succinyl-CoA to L-homoserine, forming succinyl-L-homoserine. The protein is Homoserine O-succinyltransferase of Pelagibacterium halotolerans (strain DSM 22347 / JCM 15775 / CGMCC 1.7692 / B2).